We begin with the raw amino-acid sequence, 354 residues long: Ferrochelatase (354 aa).

2 residues coordinate Fe cation: His214 and Glu295.

The protein belongs to the ferrochelatase family.

Its subcellular location is the cytoplasm. The catalysed reaction is heme b + 2 H(+) = protoporphyrin IX + Fe(2+). It functions in the pathway porphyrin-containing compound metabolism; protoheme biosynthesis; protoheme from protoporphyrin-IX: step 1/1. Its function is as follows. Catalyzes the ferrous insertion into protoporphyrin IX. The polypeptide is Ferrochelatase (Burkholderia ambifaria (strain MC40-6)).